A 319-amino-acid polypeptide reads, in one-letter code: tRNA dimethylallyltransferase (319 aa).

Position 16 to 23 (16 to 23) interacts with ATP; sequence GPTASGKS. 18–23 is a binding site for substrate; sequence TASGKS. Positions 46-49 are interaction with substrate tRNA; it reads DSMV.

The protein belongs to the IPP transferase family. As to quaternary structure, monomer. Mg(2+) serves as cofactor.

It carries out the reaction adenosine(37) in tRNA + dimethylallyl diphosphate = N(6)-dimethylallyladenosine(37) in tRNA + diphosphate. Catalyzes the transfer of a dimethylallyl group onto the adenine at position 37 in tRNAs that read codons beginning with uridine, leading to the formation of N6-(dimethylallyl)adenosine (i(6)A). This Cutibacterium acnes (strain DSM 16379 / KPA171202) (Propionibacterium acnes) protein is tRNA dimethylallyltransferase.